The primary structure comprises 196 residues: Small ribosomal subunit protein uS4m (196 aa).

An S4 RNA-binding domain is found at 88–154 (KRLDVILVRL…FKSNIRKNFQ (67 aa)).

The protein belongs to the universal ribosomal protein uS4 family.

It is found in the mitochondrion. This Marchantia polymorpha (Common liverwort) protein is Small ribosomal subunit protein uS4m (RPS4).